The chain runs to 445 residues: Disintegrin and metalloproteinase domain-containing protein 18 (445 aa).

A Peptidase M12B domain is found at 1–106 (IYRKHLKYIG…LDMQCLGDLS (106 aa)). At 1–409 (IYRKHLKYIG…TKRLSQHADS (409 aa)) the chain is on the extracellular side. Disulfide bonds link Cys18-Cys101, Cys60-Cys85, and Cys62-Cys67. Asn19 and Asn59 each carry an N-linked (GlcNAc...) asparagine glycan. N-linked (GlcNAc...) asparagine glycosylation is found at Asn84 and Asn131. The Disintegrin domain occupies 113–202 (QSVCGNGIVE…HCVPDTFALD (90 aa)). The cysteines at positions 173 and 194 are disulfide-linked. Residues Asn333 and Asn340 are each glycosylated (N-linked (GlcNAc...) asparagine). The 35-residue stretch at 342–376 (TGNDCNAAKKCKGNGICNNFGHCQCFPDYRPPDCN) folds into the EGF-like domain. 3 disulfide bridges follow: Cys346/Cys358, Cys352/Cys364, and Cys366/Cys375. A helical transmembrane segment spans residues 410–430 (WVILGFFIFLPFIMTLFLGII). Topologically, residues 431–445 (KRNERKIVPQKEQER) are cytoplasmic.

The prodomain and the metalloprotease-like domain are cleaved during the epididymal maturation of the spermatozoa. In terms of tissue distribution, expressed specifically in testis.

Its subcellular location is the membrane. Sperm surface membrane protein that may be involved in spermatogenesis and fertilization. This is a non catalytic metalloprotease-like protein. The chain is Disintegrin and metalloproteinase domain-containing protein 18 (Adam18) from Rattus norvegicus (Rat).